The primary structure comprises 207 residues: NADH-ubiquinone oxidoreductase chain 6 (207 aa).

5 helical membrane-spanning segments follow: residues 15 to 35 (ILLD…ILVS), 40 to 60 (SILY…LIGI), 66 to 86 (LYIL…LSLF), 116 to 136 (LFIL…NNIY), and 184 to 204 (ILLI…IVLT).

The protein belongs to the complex I subunit 6 family.

It is found in the mitochondrion membrane. It catalyses the reaction a ubiquinone + NADH + 5 H(+)(in) = a ubiquinol + NAD(+) + 4 H(+)(out). Its function is as follows. Core subunit of the mitochondrial membrane respiratory chain NADH dehydrogenase (Complex I) that is believed to belong to the minimal assembly required for catalysis. Complex I functions in the transfer of electrons from NADH to the respiratory chain. The immediate electron acceptor for the enzyme is believed to be ubiquinone. In Wickerhamomyces canadensis (Yeast), this protein is NADH-ubiquinone oxidoreductase chain 6 (ND6).